The sequence spans 368 residues: Peptide chain release factor 2 (368 aa).

Q250 carries the N5-methylglutamine modification.

This sequence belongs to the prokaryotic/mitochondrial release factor family. Post-translationally, methylated by PrmC. Methylation increases the termination efficiency of RF2.

The protein resides in the cytoplasm. Functionally, peptide chain release factor 2 directs the termination of translation in response to the peptide chain termination codons UGA and UAA. The sequence is that of Peptide chain release factor 2 from Rickettsia africae (strain ESF-5).